The sequence spans 178 residues: Bifunctional protein PyrR (178 aa).

Residues 99–111 carry the PRPP-binding motif; the sequence is VIIVDDVLYTCRT.

The protein belongs to the purine/pyrimidine phosphoribosyltransferase family. PyrR subfamily. As to quaternary structure, homodimer and homohexamer; in equilibrium.

It carries out the reaction UMP + diphosphate = 5-phospho-alpha-D-ribose 1-diphosphate + uracil. Its function is as follows. Regulates transcriptional attenuation of the pyrimidine nucleotide (pyr) operon by binding in a uridine-dependent manner to specific sites on pyr mRNA. This disrupts an antiterminator hairpin in the RNA and favors formation of a downstream transcription terminator, leading to a reduced expression of downstream genes. Also displays a weak uracil phosphoribosyltransferase activity which is not physiologically significant. The chain is Bifunctional protein PyrR from Clostridium perfringens (strain ATCC 13124 / DSM 756 / JCM 1290 / NCIMB 6125 / NCTC 8237 / Type A).